The sequence spans 599 residues: DNA primase (599 aa).

The segment at 40–64 (CPFHGENTPSFSVSPDKQLYHCFGC) adopts a CHC2-type zinc-finger fold. In terms of domain architecture, Toprim spans 259–342 (NEAVLFEGYV…KVAMIPDGLD (84 aa)). Residues glutamate 265, aspartate 309, and aspartate 311 each contribute to the Mg(2+) site.

The protein belongs to the DnaG primase family. Monomer. Interacts with DnaB. Requires Zn(2+) as cofactor. Mg(2+) is required as a cofactor.

The catalysed reaction is ssDNA + n NTP = ssDNA/pppN(pN)n-1 hybrid + (n-1) diphosphate.. RNA polymerase that catalyzes the synthesis of short RNA molecules used as primers for DNA polymerase during DNA replication. The protein is DNA primase of Halalkalibacterium halodurans (strain ATCC BAA-125 / DSM 18197 / FERM 7344 / JCM 9153 / C-125) (Bacillus halodurans).